A 607-amino-acid polypeptide reads, in one-letter code: Chaperone protein HtpG (607 aa).

Residues 1 to 323 (MKKEEKIFKA…CDSLSLNISR (323 aa)) form an a; substrate-binding region. A b region spans residues 324-534 (EILQQNAELQ…KGGLSLEMEK (211 aa)). The tract at residues 535–607 (TLSEMTNNND…FIKNLNSLIK (73 aa)) is c.

It belongs to the heat shock protein 90 family. In terms of assembly, homodimer.

It localises to the cytoplasm. Functionally, molecular chaperone. Has ATPase activity. The polypeptide is Chaperone protein HtpG (Fusobacterium nucleatum subsp. nucleatum (strain ATCC 25586 / DSM 15643 / BCRC 10681 / CIP 101130 / JCM 8532 / KCTC 2640 / LMG 13131 / VPI 4355)).